The following is a 482-amino-acid chain: Argininosuccinate synthase (482 aa).

Residues 17 to 25 (AFSGGLDTS) and alanine 43 contribute to the ATP site. Tyrosine 99 provides a ligand contact to L-citrulline. ATP contacts are provided by glycine 129 and threonine 131. 3 residues coordinate L-aspartate: threonine 131, asparagine 135, and aspartate 136. Asparagine 135 is an L-citrulline binding site. Aspartate 136 provides a ligand contact to ATP. 2 residues coordinate L-citrulline: arginine 139 and serine 192. Aspartate 194 is a binding site for ATP. Residues threonine 201, glutamate 203, and glutamate 280 each coordinate L-citrulline. A disordered region spans residues 461–482 (SRGEATDEETMLDRAAMESGTD).

It belongs to the argininosuccinate synthase family. Type 2 subfamily. As to quaternary structure, homotetramer.

It is found in the cytoplasm. It catalyses the reaction L-citrulline + L-aspartate + ATP = 2-(N(omega)-L-arginino)succinate + AMP + diphosphate + H(+). It participates in amino-acid biosynthesis; L-arginine biosynthesis; L-arginine from L-ornithine and carbamoyl phosphate: step 2/3. The polypeptide is Argininosuccinate synthase (argG) (Streptomyces lavendulae).